The primary structure comprises 396 residues: MSVRLVLAKGREKSLLRRHPWVFSGAVARMEGKASLGETIDIVDHQGKWLARGAYSPASQIRARVWTFDPSESIDIAFFSRRLQQAQKWRDWLAQKDGLDSYRLIAGESDGLPGITIDRFGNFLVLQLLSAGAEYQRAALISALQTLYPECSIYDRSDVAVRKKEGMELTQGPVTGELPPALLPIEEHGMKLLVDIQHGHKTGYYLDQRDSRLATRRYVENKRVLNCFSYTGGFAVSALMGGCSQVVSVDTSQEALDIARQNVELNKLDLSKAEFVRDDVFKLLRTYRDRGEKFDVIVMDPPKFVENKSQLMGACRGYKDINMLAIQLLNEGGILLTFSCSGLMTSDLFQKIIADAAIDAGRDVQFIEQFRQAADHPVIATYPEGLYLKGFACRVM.

The 80-residue stretch at 2 to 81 (SVRLVLAKGR…ESIDIAFFSR (80 aa)) folds into the PUA domain.

It belongs to the methyltransferase superfamily. RlmI family.

The protein localises to the cytoplasm. It catalyses the reaction cytidine(1962) in 23S rRNA + S-adenosyl-L-methionine = 5-methylcytidine(1962) in 23S rRNA + S-adenosyl-L-homocysteine + H(+). Its function is as follows. Specifically methylates the cytosine at position 1962 (m5C1962) of 23S rRNA. The sequence is that of Ribosomal RNA large subunit methyltransferase I from Escherichia coli (strain K12 / MC4100 / BW2952).